Reading from the N-terminus, the 652-residue chain is Regulator of DNA class I crossover intermediates 1 (652 aa).

Residues 1 to 231 (MNWVGGSRSR…TLFERLNSLG (231 aa)) constitute a DNA-binding region (binds DNA containing a D-loop). Disordered regions lie at residues 363–434 (NKTS…NIPS) and 469–506 (KISLDSAQSSRSTSYSPRPTDSCFSSSSDLPSEDEDQI). Positions 377-388 (YQREYNKNERND) are enriched in basic and acidic residues. Residues 389–401 (LSTSFENDYYPSS) are compositionally biased toward polar residues. Basic and acidic residues predominate over residues 402-417 (SERKEKFENDYQEKTP). The segment covering 473-498 (DSAQSSRSTSYSPRPTDSCFSSSSDL) has biased composition (low complexity).

In terms of assembly, interacts with MSH5. Interacts with TEX11.

The protein localises to the chromosome. Involved in recombination, probably acting by stabilizing recombination intermediates during meiotic crossover formation. Required for normal germline development and fertility. Required for meiotic progression, complete chromosomal synapsis and crossover formation. Binds double-stranded DNA. However, also binds branched DNA molecules, such as those containing a D-loop or Holliday junction structure. Probably not required for formation of DNA double-strand breaks (DSBs). Also binds RNA in an RNA structure-independent manner, with a preference for binding 3'-UTR regions of mRNAs; may stabilize bound RNAs. The sequence is that of Regulator of DNA class I crossover intermediates 1 from Homo sapiens (Human).